The chain runs to 431 residues: Enolase (431 aa).

Glutamine 167 is a binding site for (2R)-2-phosphoglycerate. Glutamate 209 serves as the catalytic Proton donor. Residues aspartate 246, glutamate 289, and aspartate 316 each contribute to the Mg(2+) site. The (2R)-2-phosphoglycerate site is built by lysine 341, arginine 370, serine 371, and lysine 392. Lysine 341 acts as the Proton acceptor in catalysis.

Belongs to the enolase family. In terms of assembly, component of the RNA degradosome, a multiprotein complex involved in RNA processing and mRNA degradation. It depends on Mg(2+) as a cofactor.

The protein resides in the cytoplasm. The protein localises to the secreted. It is found in the cell surface. It carries out the reaction (2R)-2-phosphoglycerate = phosphoenolpyruvate + H2O. Its pathway is carbohydrate degradation; glycolysis; pyruvate from D-glyceraldehyde 3-phosphate: step 4/5. Catalyzes the reversible conversion of 2-phosphoglycerate (2-PG) into phosphoenolpyruvate (PEP). It is essential for the degradation of carbohydrates via glycolysis. This chain is Enolase, found in Shewanella sp. (strain ANA-3).